Here is a 531-residue protein sequence, read N- to C-terminus: Jacalin-related lectin 16 (531 aa).

Jacalin-type lectin domains are found at residues 1–87, 90–232, 235–378, and 385–528; these read MDRS…YFTW, PTKM…YFTT, LISL…YFRP, and TEKV…NVLP.

It belongs to the jacalin lectin family.

The sequence is that of Jacalin-related lectin 16 (JAL16) from Arabidopsis thaliana (Mouse-ear cress).